The chain runs to 312 residues: HPr kinase/phosphorylase (312 aa).

Residues histidine 139 and lysine 160 contribute to the active site. 154–161 (GDSGIGKS) contributes to the ATP binding site. Serine 161 provides a ligand contact to Mg(2+). Residue aspartate 178 is the Proton acceptor; for phosphorylation activity. Proton donor; for dephosphorylation activity of the active site. Residues 202–211 (IEIRGVGIID) form an important for the catalytic mechanism of both phosphorylation and dephosphorylation region. Residue glutamate 203 participates in Mg(2+) binding. Residue arginine 244 is part of the active site. An important for the catalytic mechanism of dephosphorylation region spans residues 265 to 270 (PVKTGR).

The protein belongs to the HPrK/P family. In terms of assembly, homohexamer. Mg(2+) is required as a cofactor.

The enzyme catalyses [HPr protein]-L-serine + ATP = [HPr protein]-O-phospho-L-serine + ADP + H(+). It carries out the reaction [HPr protein]-O-phospho-L-serine + phosphate + H(+) = [HPr protein]-L-serine + diphosphate. In terms of biological role, catalyzes the ATP- as well as the pyrophosphate-dependent phosphorylation of a specific serine residue in HPr, a phosphocarrier protein of the phosphoenolpyruvate-dependent sugar phosphotransferase system (PTS). HprK/P also catalyzes the pyrophosphate-producing, inorganic phosphate-dependent dephosphorylation (phosphorolysis) of seryl-phosphorylated HPr (P-Ser-HPr). The two antagonistic activities of HprK/P are regulated by several intracellular metabolites, which change their concentration in response to the absence or presence of rapidly metabolisable carbon sources (glucose, fructose, etc.) in the growth medium. Therefore, by controlling the phosphorylation state of HPr, HPrK/P is a sensor enzyme that plays a major role in the regulation of carbon metabolism and sugar transport: it mediates carbon catabolite repression (CCR), and regulates PTS-catalyzed carbohydrate uptake and inducer exclusion. In Streptococcus pneumoniae serotype 4 (strain ATCC BAA-334 / TIGR4), this protein is HPr kinase/phosphorylase.